A 475-amino-acid chain; its full sequence is 3-isopropylmalate dehydratase large subunit (475 aa).

Positions 353, 414, and 417 each coordinate [4Fe-4S] cluster.

This sequence belongs to the aconitase/IPM isomerase family. LeuC type 1 subfamily. Heterodimer of LeuC and LeuD. It depends on [4Fe-4S] cluster as a cofactor.

The catalysed reaction is (2R,3S)-3-isopropylmalate = (2S)-2-isopropylmalate. It functions in the pathway amino-acid biosynthesis; L-leucine biosynthesis; L-leucine from 3-methyl-2-oxobutanoate: step 2/4. Catalyzes the isomerization between 2-isopropylmalate and 3-isopropylmalate, via the formation of 2-isopropylmaleate. This is 3-isopropylmalate dehydratase large subunit from Marinomonas sp. (strain MWYL1).